A 1620-amino-acid chain; its full sequence is DNA (cytosine-5)-methyltransferase 1 (1620 aa).

Residues 1–21 (MPARTAPARVPALASPAGSLP) are disordered. Residues 1-120 (MPARTAPARV…SRPTWRAEMA (120 aa)) are interaction with DMAP1. Residues 1-145 (MPARTAPARV…RRSKSDSDTL (145 aa)) are interaction with DNMT3A. Interaction with the PRC2/EED-EZH2 complex stretches follow at residues 1-343 (MPAR…SERK) and 305-609 (APET…RVMG). Residue S15 is modified to Phosphoserine. A DMAP1-binding domain is found at 16–109 (PAGSLPDHVR…TQKANGCPAN (94 aa)). Residue K70 is modified to N6,N6-dimethyllysine; by EHMT2. A disordered region spans residues 96 to 369 (THTLTQKANG…PECGQHLDDP (274 aa)). Basic residues predominate over residues 126–137 (PRSRPKPRGPRR). The residue at position 138 (S138) is a Phosphoserine. Residue K139 is modified to N6-methyllysine; by SETD7. S140 carries the phosphoserine modification. Polar residues predominate over residues 144 to 155 (TLSVETSPSSVA). S146 is subject to Phosphoserine; by CK1. Residues 147–217 (VETSPSSVAT…SGAAAAVEKL (71 aa)) are interaction with DNMT3B. Phosphoserine is present on residues S150 and S152. An interaction with PCNA region spans residues 161–172 (RQTTITAHFTKG). Phosphothreonine is present on T164. K171 bears the N6-acetyllysine mark. Residues 175–202 (KRKPKEESEEGNSAESAAEERDQDKKRR) carry the Nuclear localization signal motif. Residues 192–205 (AEERDQDKKRRVVD) show a composition bias toward basic and acidic residues. At S240 the chain carries Phosphoserine. 2 stretches are compositionally biased toward basic and acidic residues: residues 246-267 (RELS…PETH) and 286-300 (QPRD…KEAE). Position 255 is an N6-acetyllysine; alternate (K255). A Glycyl lysine isopeptide (Lys-Gly) (interchain with G-Cter in SUMO2); alternate cross-link involves residue K255. Over residues 308 to 317 (TPEDRDEDER) the composition is skewed to acidic residues. Residues 328–556 (KLESHTVPVQ…NVNRFTEDSL (229 aa)) are DNA replication foci-targeting sequence. Positions 359 and 362 each coordinate Zn(2+). K372 carries the post-translational modification N6-acetyllysine. Zn(2+) is bound by residues C420 and H424. A phosphoserine mark is found at S515 and S555. The CXXC-type zinc-finger motif lies at 649–695 (NAMKRRRCGVCEVCQQPECGKCKACKDMVKFGGTGRSKQACLKRRCP). C656, C659, C662, C667, C670, C673, C689, and C694 together coordinate Zn(2+). Positions 696 to 757 (NLAVKEADDD…TYYQKVSIDE (62 aa)) are autoinhibitory linker. An interaction with HDAC1 region spans residues 696–813 (NLAVKEADDD…TDTVLGATSD (118 aa)). A compositionally biased stretch (acidic residues) spans 702 to 713 (ADDDEEADDDVS). A disordered region spans residues 702 to 732 (ADDDEEADDDVSEMPSPKKLHQGKKKKQNKD). Phosphoserine occurs at positions 713 and 717. A compositionally biased stretch (basic residues) spans 719 to 730 (KKLHQGKKKKQN). A Phosphoserine modification is found at S735. K752 bears the N6-acetyllysine mark. Residues 758–884 (EMLEVGDCVS…QEYARFESPP (127 aa)) form the BAH 1 domain. A Phosphoserine modification is found at S882. N6-acetyllysine is present on residues K895, K961, K965, and K979. Residues 976-1103 (HYRKYSDYIK…SKTKNFEDPP (128 aa)) enclose the BAH 2 domain. Positions 1097–1136 (KNFEDPPNHARSPGNKGKGKGKGKGKGKHQVSEPKEPEAA) are disordered. 6 repeat units span residues 1112–1113 (KG), 1114–1115 (KG), 1116–1117 (KG), 1118–1119 (KG), 1120–1121 (KG), and 1122–1123 (KG). The tract at residues 1112-1125 (KGKGKGKGKGKGKH) is 7 X 2 AA tandem repeats of K-G. The span at 1113 to 1125 (GKGKGKGKGKGKH) shows a compositional bias: basic residues. K1114, K1116, K1118, K1120, K1122, and K1124 each carry N6-acetyllysine. A 7; approximate repeat occupies 1124–1125 (KH). The tract at residues 1124–1620 (KHQVSEPKEP…KAKEEAATKD (497 aa)) is interaction with the PRC2/EED-EZH2 complex. The segment covering 1126–1135 (QVSEPKEPEA) has biased composition (basic and acidic residues). The region spanning 1142 to 1601 (LRTLDVFSGC…LEIKLCLLSS (460 aa)) is the SAM-dependent MTase C5-type domain. Residues 1142–1620 (LRTLDVFSGC…KAKEEAATKD (479 aa)) are catalytic. Residues S1149, 1153-1154 (GL), 1171-1172 (EM), and 1193-1194 (DC) each bind S-adenosyl-L-methionine. The active site involves C1229. An N6-acetyllysine mark is found at K1352 and K1418. V1582 serves as a coordination point for S-adenosyl-L-methionine. K1611 is covalently cross-linked (Glycyl lysine isopeptide (Lys-Gly) (interchain with G-Cter in SUMO2)).

Belongs to the class I-like SAM-binding methyltransferase superfamily. C5-methyltransferase family. Homodimer. Forms a stable complex with E2F1, BB1 and HDAC1. Forms a complex with DMAP1 and HDAC2, with direct interaction. Interacts with the PRC2/EED-EZH2 complex. Probably part of a corepressor complex containing ZNF304, TRIM28, SETDB1 and DNMT1. Interacts with UHRF1; promoting its recruitment to hemimethylated DNA. Interacts with USP7, promoting its deubiquitination. Interacts with BAZ2A/TIP5. Interacts with PCNA. Interacts with MBD2 and MBD3. Interacts with DNMT3A and DNMT3B. Interacts with UBC9. Interacts with HDAC1. Interacts with CSNK1D. Interacts with SIRT7. Interacts with ZNF263; recruited to the SIX3 promoter along with other proteins involved in chromatin modification and transcriptional corepression where it contributes to transcriptional repression. Interacts with L3MBTL3 and DCAF5; the interaction requires DNMT1 methylation at Lys-139 and is necessary to target DNMT1 for ubiquitination by the CRL4-DCAF5 E3 ubiquitin ligase complex and proteasomal degradation. Interacts with PHF20L1; the interaction requires DNMT1 methylation at Lys-139 and protects DNMT1 from ubiquitination and proteasomal degradation. Post-translationally, sumoylated; sumoylation increases activity. Phosphorylation at Ser-146 by CK1 reduces DNA-binding activity. In terms of processing, acetylation on multiple lysines, mainly by KAT2B/PCAF, regulates cell cycle G(2)/M transition. Deacetylation of Lys-1352 and Lys-1418 by SIRT1 increases methyltransferase activity. Post-translationally, phosphorylation of Ser-152 by CDKs is important for enzymatic activity and protein stability. Phosphorylation of Ser-140 by AKT1 prevents methylation by SETD7 thereby increasing DNMT1 stability. Methylation at Lys-139 by SETD7 is necessary for the regulation of DNMT1 proteasomal degradation. In terms of processing, ubiquitinated by UHRF1; interaction with USP7 counteracts ubiquitination by UHRF1 by promoting deubiquitination and preventing degradation by the proteasome. In terms of tissue distribution, isoform 1 is expressed in embryonic stem cells and in somatic tissues. Isoform 2 is expressed in oocytes, preimplantation embryos, testis and in skeletal muscle during myogenesis.

It is found in the nucleus. The protein resides in the cytoplasm. It catalyses the reaction a 2'-deoxycytidine in DNA + S-adenosyl-L-methionine = a 5-methyl-2'-deoxycytidine in DNA + S-adenosyl-L-homocysteine + H(+). Allosterically regulated. The binding of 5-methylcytosine-containing DNA to the N-terminal parts of DNMT1 causes an allosteric activation of the catalytic domain by a direct interaction of its Zn-binding domain with the catalytic domain. Methylates CpG residues. Preferentially methylates hemimethylated DNA. Associates with DNA replication sites in S phase maintaining the methylation pattern in the newly synthesized strand, that is essential for epigenetic inheritance. Associates with chromatin during G2 and M phases to maintain DNA methylation independently of replication. It is responsible for maintaining methylation patterns established in development. DNA methylation is coordinated with methylation of histones. Mediates transcriptional repression by direct binding to HDAC2. In association with DNMT3B and via the recruitment of CTCFL/BORIS, involved in activation of BAG1 gene expression by modulating dimethylation of promoter histone H3 at H3K4 and H3K9. Probably forms a corepressor complex required for activated KRAS-mediated promoter hypermethylation and transcriptional silencing of tumor suppressor genes (TSGs) or other tumor-related genes in colorectal cancer (CRC) cells. Also required to maintain a transcriptionally repressive state of genes in undifferentiated embryonic stem cells (ESCs). Associates at promoter regions of tumor suppressor genes (TSGs) leading to their gene silencing. Promotes tumor growth. This chain is DNA (cytosine-5)-methyltransferase 1 (Dnmt1), found in Mus musculus (Mouse).